Here is a 229-residue protein sequence, read N- to C-terminus: Germin-like protein 12-1 (229 aa).

A signal peptide spans 1–22; it reads MASSNFFLPTALIALVATQAMA. A disulfide bridge connects residues cysteine 32 and cysteine 47. The region spanning 62 to 217 is the Cupin type-1 domain; the sequence is ANLDKPMDTT…AFQVDKKAVD (156 aa). Residue asparagine 78 is glycosylated (N-linked (GlcNAc...) asparagine). Positions 111, 113, 118, and 162 each coordinate Mn(2+).

The protein belongs to the germin family. As to quaternary structure, oligomer (believed to be a pentamer but probably hexamer).

The protein resides in the secreted. It is found in the extracellular space. Its subcellular location is the apoplast. May play a role in plant defense. Probably has no oxalate oxidase activity even if the active site is conserved. The chain is Germin-like protein 12-1 from Oryza sativa subsp. japonica (Rice).